The chain runs to 110 residues: Large ribosomal subunit protein uL23c (110 aa).

Belongs to the universal ribosomal protein uL23 family. Part of the 50S ribosomal subunit.

It localises to the plastid. Its subcellular location is the chloroplast. Functionally, binds to 23S rRNA. The sequence is that of Large ribosomal subunit protein uL23c (rpl23) from Porphyra purpurea (Red seaweed).